A 921-amino-acid chain; its full sequence is Isoleucine--tRNA ligase 1 (921 aa).

The 'HIGH' region motif lies at 57 to 67 (PYANGDIHMGH). L-isoleucyl-5'-AMP is bound at residue E552. Residues 593-597 (KMSKS) carry the 'KMSKS' region motif. Residue K596 coordinates ATP. 4 residues coordinate Zn(2+): C888, C891, C908, and C911.

This sequence belongs to the class-I aminoacyl-tRNA synthetase family. IleS type 1 subfamily. As to quaternary structure, monomer. It depends on Zn(2+) as a cofactor.

It localises to the cytoplasm. The catalysed reaction is tRNA(Ile) + L-isoleucine + ATP = L-isoleucyl-tRNA(Ile) + AMP + diphosphate. Functionally, catalyzes the attachment of isoleucine to tRNA(Ile). As IleRS can inadvertently accommodate and process structurally similar amino acids such as valine, to avoid such errors it has two additional distinct tRNA(Ile)-dependent editing activities. One activity is designated as 'pretransfer' editing and involves the hydrolysis of activated Val-AMP. The other activity is designated 'posttransfer' editing and involves deacylation of mischarged Val-tRNA(Ile). This is Isoleucine--tRNA ligase 1 from Bacillus cereus (strain ATCC 10987 / NRS 248).